Reading from the N-terminus, the 446-residue chain is 5-hydroxytryptamine receptor (446 aa).

Topologically, residues 1–65 are extracellular; the sequence is MEGAEGQEEL…AALVRAAAKA (65 aa). Asparagine 23, asparagine 27, asparagine 36, and asparagine 42 each carry an N-linked (GlcNAc...) asparagine glycan. Residues 66–88 traverse the membrane as a helical segment; the sequence is VVLGLLILATVVGNVFVIAAILL. Over 89–98 the chain is Cytoplasmic; that stretch reads ERHLRSAANN. A helical membrane pass occupies residues 99–120; the sequence is LILSLAVADLLVACLVMPLGAV. At 121-135 the chain is on the extracellular side; that stretch reads YEVVQRWTLGPELCD. A disulfide bridge links cysteine 134 with cysteine 214. Residues 136 to 157 traverse the membrane as a helical segment; the sequence is MWTSGDVLCCTASILHLVAIAL. Topologically, residues 158 to 176 are cytoplasmic; that stretch reads DRYWAVTNIDYIHASTAKR. The chain crosses the membrane as a helical span at residues 177–199; sequence VGMMIACVWTVSFFVCIAQLLGW. Over 200–227 the chain is Extracellular; sequence KDPDWNQRVSEDLRCVVSQDVGYQIFAT. Residues 228–249 traverse the membrane as a helical segment; it reads ASSFYVPVLIILILYWRIYQTA. Residues 250-367 lie on the Cytoplasmic side of the membrane; it reads RKRIRRRRGA…SKRERKAAKT (118 aa). The segment covering 304 to 324 has biased composition (polar residues); the sequence is TTTGFTNVSSNNTSPEKQSCA. Residues 304–329 form a disordered region; that stretch reads TTTGFTNVSSNNTSPEKQSCANGLEA. The chain crosses the membrane as a helical span at residues 368-391; the sequence is LAIITGAFVACWLPFFVLAILVPT. Over 392–399 the chain is Extracellular; sequence CDCEVSPV. Residues 400–422 form a helical membrane-spanning segment; that stretch reads LTSLSLWLGYFNSTLNPVIYTVF. At 423 to 446 the chain is on the cytoplasmic side; it reads SPEFRHAFQRLLCGRRVRRRRAPQ.

The protein belongs to the G-protein coupled receptor 1 family.

The protein resides in the cell membrane. This is a receptor for 5-hydroxytryptamine (serotonin), a biogenic hormone that function as a neurotransmitter, a hormone, and a mitogen. The sequence is that of 5-hydroxytryptamine receptor from Bombyx mori (Silk moth).